The sequence spans 100 residues: MIPLQHGLILAAILFVLGLTGVTIRRNLLFMLIGLEIMINAAALAFVVAGSYWGQADGQVMFILAISLAAAEASIGLALLLQLHRRSQNLNIDKVSEMRG.

3 helical membrane-spanning segments follow: residues 2–22 (IPLQHGLILAAILFVLGLTGV), 28–48 (LLFMLIGLEIMINAAALAFVV), and 60–80 (VMFILAISLAAAEASIGLALL).

This sequence belongs to the complex I subunit 4L family. As to quaternary structure, NDH-1 is composed of 13 different subunits. Subunits NuoA, H, J, K, L, M, N constitute the membrane sector of the complex.

It is found in the cell inner membrane. It catalyses the reaction a quinone + NADH + 5 H(+)(in) = a quinol + NAD(+) + 4 H(+)(out). NDH-1 shuttles electrons from NADH, via FMN and iron-sulfur (Fe-S) centers, to quinones in the respiratory chain. The immediate electron acceptor for the enzyme in this species is believed to be ubiquinone. Couples the redox reaction to proton translocation (for every two electrons transferred, four hydrogen ions are translocated across the cytoplasmic membrane), and thus conserves the redox energy in a proton gradient. The polypeptide is NADH-quinone oxidoreductase subunit K (Erwinia tasmaniensis (strain DSM 17950 / CFBP 7177 / CIP 109463 / NCPPB 4357 / Et1/99)).